We begin with the raw amino-acid sequence, 1071 residues long: Methionine S-methyltransferase (1071 aa).

A2 carries the post-translational modification N-acetylalanine.

This sequence belongs to the class I-like SAM-binding methyltransferase superfamily. Homotetramer. Expressed in roots, rosette leaves and cauline leaves. Expressed at a lower level in developing seeds.

The protein localises to the cytoplasm. It catalyses the reaction L-methionine + S-adenosyl-L-methionine = S-methyl-L-methionine + S-adenosyl-L-homocysteine. Functionally, catalyzes the S-methylmethionine (SMM) biosynthesis from adenosyl-L-homocysteine (AdoMet) and methionine. SMM biosynthesis (by MMT1) and degradation (by HMT-1, HMT-2 and HMT-3) constitute the SMM cycle in plants, which is probably required to achieve short term control of AdoMet level. Also able to catalyze the selenium-methylmethionine (SeMM) from AdoMet and selenium-methionine (SeMet). May play a role in phoem sulfur transport; such function is however not essential. The chain is Methionine S-methyltransferase (MMT1) from Arabidopsis thaliana (Mouse-ear cress).